Here is a 140-residue protein sequence, read N- to C-terminus: NADPH-dependent 7-cyano-7-deazaguanine reductase (140 aa).

Catalysis depends on Cys-51, which acts as the Thioimide intermediate. Catalysis depends on Asp-58, which acts as the Proton donor. Residues 73–75 and 92–93 each bind substrate; these read LES and HE.

This sequence belongs to the GTP cyclohydrolase I family. QueF type 1 subfamily.

Its subcellular location is the cytoplasm. The enzyme catalyses 7-aminomethyl-7-carbaguanine + 2 NADP(+) = 7-cyano-7-deazaguanine + 2 NADPH + 3 H(+). The protein operates within tRNA modification; tRNA-queuosine biosynthesis. In terms of biological role, catalyzes the NADPH-dependent reduction of 7-cyano-7-deazaguanine (preQ0) to 7-aminomethyl-7-deazaguanine (preQ1). This Syntrophus aciditrophicus (strain SB) protein is NADPH-dependent 7-cyano-7-deazaguanine reductase.